A 667-amino-acid polypeptide reads, in one-letter code: Endogenous retrovirus group K member 5 Gag polyprotein (667 aa).

A lipid anchor (N-myristoyl glycine) is attached at glycine 2. The tract at residues 166 to 188 (KGPELVGPSESKPRGPSPLPAGQ) is disordered. 2 CCHC-type zinc fingers span residues 543-560 (KKCY…SCPV) and 580-597 (GLCP…QCHS). Positions 598 to 667 (KFDKDGQPLS…CPAPQQAAPQ (70 aa)) are disordered. The segment covering 648 to 667 (GVSQLQQSNSCPAPQQAAPQ) has biased composition (polar residues).

Belongs to the beta type-B retroviral Gag protein family. HERV class-II K(HML-2) gag subfamily. Post-translationally, myristoylation is essential for retroviral assembly. Alteration of the glycine residue leads to a block in the budding of particles and an accumulation of Gag inside the cell. Specific enzymatic cleavages may yield mature proteins.

The protein resides in the cell membrane. The products of the Gag polyproteins of infectious retroviruses perform highly complex orchestrated tasks during the assembly, budding, maturation, and infection stages of the viral replication cycle. During viral assembly, the proteins form membrane associations and self-associations that ultimately result in budding of an immature virion from the infected cell. Gag precursors also function during viral assembly to selectively bind and package two plus strands of genomic RNA. Endogenous Gag proteins may have kept, lost or modified their original function during evolution. This chain is Endogenous retrovirus group K member 5 Gag polyprotein (ERVK-5), found in Homo sapiens (Human).